Here is a 290-residue protein sequence, read N- to C-terminus: Putative heme oxygenase 3 (290 aa).

A compositionally biased stretch (acidic residues) spans M1 to D12. The disordered stretch occupies residues M1–S33. Over residues E13–S33 the composition is skewed to basic and acidic residues. HRM repeat units lie at residues K238 to A243 and N255 to M260.

It belongs to the heme oxygenase family. As to expression, found in the spleen, liver, thymus, prostate, heart, kidney, brain and testis.

It carries out the reaction heme b + 3 reduced [NADPH--hemoprotein reductase] + 3 O2 = biliverdin IXalpha + CO + Fe(2+) + 3 oxidized [NADPH--hemoprotein reductase] + 3 H2O + H(+). Functionally, heme oxygenase cleaves the heme ring at the alpha methene bridge to form biliverdin. Biliverdin is subsequently converted to bilirubin by biliverdin reductase. Heme oxygenase 3 could be implicated in some heme-dependent regulatory role in the cell. In Rattus norvegicus (Rat), this protein is Putative heme oxygenase 3 (Hmox3).